The following is a 355-amino-acid chain: WAT1-related protein At3g28130 (355 aa).

Helical transmembrane passes span Ala-11–Phe-31, Tyr-42–Phe-62, Ile-80–Tyr-100, Thr-104–Phe-124, Ser-136–Tyr-156, Trp-186–Leu-206, Phe-218–Val-238, Pro-244–Phe-264, Leu-290–Gly-310, and Ser-311–Lys-331. The 126-residue stretch at Thr-29 to Val-154 folds into the EamA domain.

Belongs to the drug/metabolite transporter (DMT) superfamily. Plant drug/metabolite exporter (P-DME) (TC 2.A.7.4) family.

Its subcellular location is the membrane. The sequence is that of WAT1-related protein At3g28130 from Arabidopsis thaliana (Mouse-ear cress).